A 762-amino-acid polypeptide reads, in one-letter code: Homeobox-leucine zipper protein MERISTEM L1 (762 aa).

Positions 13–72 (MFDMTPKNSENDLGITGSHEEDFETKSGAEVTMENPLEEELQDPNQRPNKKKRYHRHTQR) are disordered. Residues 30-39 (SHEEDFETKS) are compositionally biased toward basic and acidic residues. A compositionally biased stretch (basic residues) spans 60-71 (PNKKKRYHRHTQ). The segment at residues 62–121 (KKKRYHRHTQRQIQELESFFKECPHPDDKQRKELSRELSLEPLQVKFWFQNKRTQMKAQH) is a DNA-binding region (homeobox). Residues 110 to 192 (FQNKRTQMKA…DRISAIAAKY (83 aa)) are a coiled coil. Residues 253-484 (SEADKPMIVE…LDRQCERLAS (232 aa)) form the START domain.

This sequence belongs to the HD-ZIP homeobox family. Class IV subfamily. Interacts with GAI/RGA2, RGA/RGA1/GRS, RGL2/SCL19 and PDF2. Interacts with AIL7/PLT7, ANT, BBM and AIL1.

It localises to the nucleus. Probable transcription factor involved in cell specification and pattern formation during embryogenesis. Binds to the L1 box DNA sequence 5'-TAAATG[CT]A-3'. Plays a role in maintaining the identity of L1 cells, possibly by interacting with their L1 box or other target-gene promoters; binds to the LIP1 gene promoter and stimulates its expression upon imbibition. Acts as a positive regulator of gibberellins (GAs)-regulated epidermal gene expression (e.g. LIP1, LIP2, LTP1, FDH and PDF1). Functionally redundant to PDF2. Seems to promote cell differentiation. This is Homeobox-leucine zipper protein MERISTEM L1 from Arabidopsis thaliana (Mouse-ear cress).